The following is a 670-amino-acid chain: UvrABC system protein B (670 aa).

Residues 26-414 form the Helicase ATP-binding domain; the sequence is EGLEDGLAHQ…GGDVIDQVVR (389 aa). Residue 39-46 participates in ATP binding; sequence GVTGSGKT. A Beta-hairpin motif is present at residues 92 to 115; the sequence is YYDYYQPEAYVPSSDTFIEKDASV. Positions 431-597 constitute a Helicase C-terminal domain; sequence QVDDLLSEIR…GINKKISDIL (167 aa). The 36-residue stretch at 630–665 folds into the UVR domain; the sequence is ELKIRELESKMLTHAQNLEFEEAAALRDEVQVLRAQ.

It belongs to the UvrB family. In terms of assembly, forms a heterotetramer with UvrA during the search for lesions. Interacts with UvrC in an incision complex.

It localises to the cytoplasm. Its function is as follows. The UvrABC repair system catalyzes the recognition and processing of DNA lesions. A damage recognition complex composed of 2 UvrA and 2 UvrB subunits scans DNA for abnormalities. Upon binding of the UvrA(2)B(2) complex to a putative damaged site, the DNA wraps around one UvrB monomer. DNA wrap is dependent on ATP binding by UvrB and probably causes local melting of the DNA helix, facilitating insertion of UvrB beta-hairpin between the DNA strands. Then UvrB probes one DNA strand for the presence of a lesion. If a lesion is found the UvrA subunits dissociate and the UvrB-DNA preincision complex is formed. This complex is subsequently bound by UvrC and the second UvrB is released. If no lesion is found, the DNA wraps around the other UvrB subunit that will check the other stand for damage. This is UvrABC system protein B from Pectobacterium atrosepticum (strain SCRI 1043 / ATCC BAA-672) (Erwinia carotovora subsp. atroseptica).